Here is a 322-residue protein sequence, read N- to C-terminus: Tetraacyldisaccharide 4'-kinase (322 aa).

Position 40-47 (40-47 (CVGGTGKT)) interacts with ATP.

Belongs to the LpxK family.

The catalysed reaction is a lipid A disaccharide + ATP = a lipid IVA + ADP + H(+). It participates in glycolipid biosynthesis; lipid IV(A) biosynthesis; lipid IV(A) from (3R)-3-hydroxytetradecanoyl-[acyl-carrier-protein] and UDP-N-acetyl-alpha-D-glucosamine: step 6/6. Its function is as follows. Transfers the gamma-phosphate of ATP to the 4'-position of a tetraacyldisaccharide 1-phosphate intermediate (termed DS-1-P) to form tetraacyldisaccharide 1,4'-bis-phosphate (lipid IVA). This Koribacter versatilis (strain Ellin345) protein is Tetraacyldisaccharide 4'-kinase.